A 105-amino-acid chain; its full sequence is Replication restart protein PriB (105 aa).

The 102-residue stretch at 1 to 102 folds into the SSB domain; that stretch reads MTTNRLVLSG…LHAEQIEFID (102 aa).

The protein belongs to the PriB family. In terms of assembly, homodimer. Interacts with PriA and DnaT. Component of the replication restart primosome. Primosome assembly occurs via a 'hand-off' mechanism. PriA binds to replication forks, subsequently PriB then DnaT bind; DnaT then displaces ssDNA to generate the helicase loading substrate.

In terms of biological role, involved in the restart of stalled replication forks, which reloads the replicative helicase on sites other than the origin of replication; the PriA-PriB pathway is the major replication restart pathway. During primosome assembly it facilitates complex formation between PriA and DnaT on DNA; stabilizes PriA on DNA. Stimulates the DNA unwinding activity of PriA helicase. The sequence is that of Replication restart protein PriB from Yersinia pseudotuberculosis serotype O:1b (strain IP 31758).